We begin with the raw amino-acid sequence, 371 residues long: Alanine racemase (371 aa).

The Proton acceptor; specific for D-alanine role is filled by Lys40. Lys40 carries the post-translational modification N6-(pyridoxal phosphate)lysine. Residue Arg136 coordinates substrate. Tyr263 acts as the Proton acceptor; specific for L-alanine in catalysis. A substrate-binding site is contributed by Met310.

It belongs to the alanine racemase family. Pyridoxal 5'-phosphate is required as a cofactor.

It catalyses the reaction L-alanine = D-alanine. It participates in amino-acid biosynthesis; D-alanine biosynthesis; D-alanine from L-alanine: step 1/1. Catalyzes the interconversion of L-alanine and D-alanine. May also act on other amino acids. The chain is Alanine racemase (alr) from Streptococcus mutans serotype c (strain ATCC 700610 / UA159).